The following is a 155-amino-acid chain: Ribosomal RNA large subunit methyltransferase H (155 aa).

S-adenosyl-L-methionine-binding positions include glycine 104 and 123 to 128 (LSRLTL).

This sequence belongs to the RNA methyltransferase RlmH family. In terms of assembly, homodimer.

It localises to the cytoplasm. It carries out the reaction pseudouridine(1915) in 23S rRNA + S-adenosyl-L-methionine = N(3)-methylpseudouridine(1915) in 23S rRNA + S-adenosyl-L-homocysteine + H(+). Functionally, specifically methylates the pseudouridine at position 1915 (m3Psi1915) in 23S rRNA. The chain is Ribosomal RNA large subunit methyltransferase H from Marinomonas sp. (strain MWYL1).